A 191-amino-acid polypeptide reads, in one-letter code: Gastrokine-3 (191 aa).

A signal peptide spans 1-30 (MPLHSLERDNMRRLIAPSILVTVFLVPALA). N33 is a glycosylation site (N-linked (GlcNAc...) asparagine). Residues 63–155 (NSVQSEWDGV…LCRAVPTYFA (93 aa)) form the BRICHOS domain. An intrachain disulfide couples C90 to C147.

This sequence belongs to the gastrokine family. As to expression, expressed in stomach. Present in mucus cells at the base of antral glands, and Brunner glands of the duodenum. Present at lower levels in the mucus neck cell region of the fundus (at protein level).

It is found in the secreted. Its function is as follows. Inhibits gastric epithelial cell proliferation. In Mus musculus (Mouse), this protein is Gastrokine-3 (Gkn3).